The primary structure comprises 335 residues: Protein-arginine kinase (335 aa).

Residues 21–244 form the Phosphagen kinase C-terminal domain; the sequence is IVMSSRIRLA…NQIIHDEKQI (224 aa). ATP is bound by residues 24–28, histidine 82, arginine 115, 166–170, and 197–202; these read SSRIR, RASVM, and RGIYGE.

The protein belongs to the ATP:guanido phosphotransferase family.

It carries out the reaction L-arginyl-[protein] + ATP = N(omega)-phospho-L-arginyl-[protein] + ADP + H(+). In terms of biological role, catalyzes the specific phosphorylation of arginine residues in proteins. The polypeptide is Protein-arginine kinase (Staphylococcus aureus (strain Mu3 / ATCC 700698)).